The primary structure comprises 270 residues: Eukaryotic translation initiation factor 3 subunit G-1 (270 aa).

The RRM domain occupies 189–267 (AAIRISNLSE…LILSVEWSKP (79 aa)).

This sequence belongs to the eIF-3 subunit G family. Component of the eukaryotic translation initiation factor 3 (eIF-3) complex. The eIF-3 complex interacts with pix.

The protein localises to the cytoplasm. Its function is as follows. RNA-binding component of the eukaryotic translation initiation factor 3 (eIF-3) complex, which is involved in protein synthesis of a specialized repertoire of mRNAs and, together with other initiation factors, stimulates binding of mRNA and methionyl-tRNAi to the 40S ribosome. The eIF-3 complex specifically targets and initiates translation of a subset of mRNAs involved in cell proliferation. This subunit can bind 18S rRNA. This is Eukaryotic translation initiation factor 3 subunit G-1 from Drosophila ananassae (Fruit fly).